A 185-amino-acid chain; its full sequence is UPF0149 protein XF_2010 (185 aa).

Belongs to the UPF0149 family.

The protein is UPF0149 protein XF_2010 of Xylella fastidiosa (strain 9a5c).